The chain runs to 247 residues: MAAVQFAAAGVLTGLLALATLASCNTDGDILYKQRLAWEDPNNVLQSWDPTLANPCTWFHVTCNLNNSVIRVDLGKAGISGPLLPDLGALESLQYMELFGNSLNGSIPSTLGNLTDLISLDLWDNLLTGPIPTTLGSISTLRYLRLYENNLTGPIPPSFGNLTSLLELKLHRNSLSGSIPASLGNIKSLQFLKLNENMLTGTVPLEVLSLVVVGNLTELNIARNNLDGTVRSSGLRVTAVIQDMRIA.

A signal peptide spans Met-1–Cys-24. Asn-66, Asn-104, and Asn-113 each carry an N-linked (GlcNAc...) asparagine glycan. 6 LRR repeats span residues Leu-90–Leu-114, Asp-116–Ile-138, Ser-139–Asn-161, Leu-162–Ile-186, Ser-188–Leu-210, and Val-213–Val-237. Asn-150 and Asn-161 each carry an N-linked (GlcNAc...) asparagine glycan. The N-linked (GlcNAc...) asparagine glycan is linked to Asn-215.

As to quaternary structure, interacts with WAK17 isoform 1; the interaction is direct. (Microbial infection) Interacts with G.zeae CFEM1; the interaction is direct. Interacts with G.zeae CFEMN1; the interaction is direct. Interacts with G.zeae CFEM5; the interaction is direct.

Contributes to activation of the hypersensitive response, a form of programmed cell death, upon fungal infection. May sense the presence of fungal material and relay the signal to WAK17 isoform 1. The sequence is that of Disease resistance protein BAK6 from Zea mays (Maize).